Consider the following 614-residue polypeptide: MRPPQCLLHTPSLASPLLLLLLWLLGGGVGAEGREDAELLVTVRGGRLRGIRLKTPGGPVSAFLGIPFAEPPMGPRRFLPPEPKQPWSGVVDATTFQSVCYQYVDTLYPGFEGTEMWNPNRELSEDCLYLNVWTPYPRPTSPTPVLVWIYGGGFYSGASSLDVYDGRFLVQAERTVLVSMNYRVGAFGFLALPGSREAPGNVGLLDQRLALQWVQENVAAFGGDPTSVTLFGESAGAASVGMHLLSPPSRGLFHRAVLQSGAPNGPWATVGMGEARRRATQLAHLVGCPPGGTGGNDTELVACLRTRPAQVLVNHEWHVLPQESVFRFSFVPVVDGDFLSDTPEALINAGDFHGLQVLVGVVKDEGSYFLVYGAPGFSKDNESLISRAEFLAGVRVGVPQVSDLAAEAVVLHYTDWLHPEDPARLREALSDVVGDHNVVCPVAQLAGRLAAQGARVYAYVFEHRASTLSWPLWMGVPHGYEIEFIFGIPLDPSRNYTAEEKIFAQRLMRYWANFARTGDPNEPRDPKAPQWPPYTAGAQQYVSLDLRPLEVRRGLRAQACAFWNRFLPKLLSATDTLDEAERQWKAEFHRWSSYMVHWKNQFDHYSKQDRCSDL.

Residues 1-31 (MRPPQCLLHTPSLASPLLLLLLWLLGGGVGA) form the signal peptide. Cysteines 100 and 127 form a disulfide. A galanthamine-binding site is contributed by tryptophan 117. A huperzine A-binding site is contributed by tryptophan 117. Glycine 153 contributes to the huprine W binding site. Residue tyrosine 164 participates in huperzine A binding. 233 to 234 (ES) lines the galanthamine pocket. Residue serine 234 participates in huprine W binding. Serine 234 functions as the Acyl-ester intermediate in the catalytic mechanism. A disulfide bridge connects residues cysteine 288 and cysteine 303. An N-linked (GlcNAc...) asparagine glycan is attached at asparagine 296. Catalysis depends on glutamate 365, which acts as the Charge relay system. Tyrosine 368 contributes to the galanthamine binding site. Huperzine A is bound at residue tyrosine 368. The N-linked (GlcNAc...) asparagine glycan is linked to asparagine 381. Residues cysteine 440 and cysteine 560 are joined by a disulfide bond. Positions 470 and 478 each coordinate huprine W. Histidine 478 acts as the Charge relay system in catalysis. N-linked (GlcNAc...) asparagine glycosylation occurs at asparagine 495. Phenylalanine 588 carries the GPI-anchor amidated glycine lipid modification.

Belongs to the type-B carboxylesterase/lipase family. Interacts with PRIMA1. The interaction with PRIMA1 is required to anchor it to the basal lamina of cells and organize into tetramers. Isoform H generates GPI-anchored dimers; disulfide linked. Isoform T generates multiple structures, ranging from monomers and dimers to collagen-tailed and hydrophobic-tailed forms, in which catalytic tetramers are associated with anchoring proteins that attach them to the basal lamina or to cell membranes. In the collagen-tailed forms, isoform T subunits are associated with a specific collagen, COLQ, which triggers the formation of isoform T tetramers, from monomers and dimers. Isoform R may be monomeric. As to expression, isoform H is highly expressed in erythrocytes.

The protein localises to the synapse. Its subcellular location is the secreted. It is found in the cell membrane. The protein resides in the nucleus. It catalyses the reaction acetylcholine + H2O = choline + acetate + H(+). Hydrolyzes rapidly the acetylcholine neurotransmitter released into the synaptic cleft allowing to terminate the signal transduction at the neuromuscular junction. Role in neuronal apoptosis. This chain is Acetylcholinesterase, found in Homo sapiens (Human).